Reading from the N-terminus, the 657-residue chain is Methionine--tRNA ligase (657 aa).

Positions 13 to 23 (YYPSGNLHIGH) match the 'HIGH' region motif. The 'KMSKS' region motif lies at 308-312 (KMSKS). Residue Lys311 coordinates ATP. The region spanning 557-657 (DFDKVEIKAA…SAIPNGAVIK (101 aa)) is the tRNA-binding domain.

This sequence belongs to the class-I aminoacyl-tRNA synthetase family. MetG type 2B subfamily. In terms of assembly, homodimer.

It is found in the cytoplasm. It catalyses the reaction tRNA(Met) + L-methionine + ATP = L-methionyl-tRNA(Met) + AMP + diphosphate. Its function is as follows. Is required not only for elongation of protein synthesis but also for the initiation of all mRNA translation through initiator tRNA(fMet) aminoacylation. The chain is Methionine--tRNA ligase from Staphylococcus aureus (strain Mu50 / ATCC 700699).